Consider the following 433-residue polypeptide: Zinc finger and SCAN domain-containing protein 4 (433 aa).

Residues 44–126 (RMVLNSFQDS…RFIEDLTDDS (83 aa)) enclose the SCAN box domain. Polar residues-rich tracts occupy residues 165 to 185 (TTREANMGTPSQTSQDTSLET), 195 to 210 (GWNSSSKTTRVNENIT), and 277 to 299 (QPEQSSPESALTHQSNEGNSTCE). Disordered stretches follow at residues 165 to 210 (TTRE…ENIT) and 275 to 301 (ISQPEQSSPESALTHQSNEGNSTCEVH). 4 C2H2-type zinc fingers span residues 312–334 (YKCEECPKVFKYLCHLLAHQRRH), 340–362 (FVCPECQKGFFQISDLRVHQIIH), 368–390 (FTCSMCKKSFSHKTNLRSHERIH), and 396–418 (YTCPFCKTSYRQSSTYHRHMRTH).

It localises to the nucleus. The protein resides in the chromosome. It is found in the telomere. Embryonic stem (ES) cell-specific transcription factor required to regulate ES cell pluripotency. Binds telomeres and plays a key role in genomic stability in ES cells by regulating telomere elongation. Acts as an activator of spontaneous telomere sister chromatid exchange (T-SCE) and telomere elongation in undifferentiated ES cells. This is Zinc finger and SCAN domain-containing protein 4 (ZSCAN4) from Homo sapiens (Human).